Reading from the N-terminus, the 318-residue chain is 2-keto-3-deoxygluconate permease (318 aa).

The next 10 membrane-spanning stretches (helical) occupy residues 10-30 (IPGG…TFTP), 42-62 (GLIT…GASI), 76-96 (VLVV…GTFL), 105-125 (MLAG…NGGL), 139-159 (AGAF…VILG), 163-183 (IATF…IGFA), 199-219 (VQTL…LSVI), 224-244 (FAGI…LILA), 263-283 (AGAA…FAPV), and 289-309 (ALVA…TALW).

This sequence belongs to the KdgT transporter family.

It localises to the cell inner membrane. The catalysed reaction is 2-dehydro-3-deoxy-D-gluconate(in) + H(+)(in) = 2-dehydro-3-deoxy-D-gluconate(out) + H(+)(out). Functionally, catalyzes the proton-dependent uptake of 2-keto-3-deoxygluconate (KDG) into the cell. The polypeptide is 2-keto-3-deoxygluconate permease (Pectobacterium carotovorum subsp. carotovorum (Erwinia carotovora subsp. carotovora)).